The sequence spans 493 residues: MHPHRDPRGLWLLLPSLSLLLFEVARAGRAVVSCPAACLCASNILSCSKQQLPNVPHSLPSYTALLDLSHNNLSRLRAEWTPTRLTQLHSLLLSHNHLNFISSEAFSPVPNLRYLDLSSNQLRTLDEFLFSDLQVLEVLLLYNNHIMAVDRCAFDDMAQLQKLYLSQNQISRFPLELVKEGAKLPKLTLLDLSSNKLKNLPLPDLQKLPAWIKNGLYLHNNPLNCDCELYQLFSHWQYRQLSSVMDFQEDLYCMNSKKLHNVFNLSFLNCGEYKERAWEAHLGDTLIIKCDTKQQGMTKVWVTPSNERVLDEVTNGTVSVSKDGSLLFQQVQVEDGGVYTCYAMGETFNETLSVELKVHNFTLHGHHDTLNTAYTTLVGCILSVVLVLIYLYLTPCRCWCRGVEKPSSHQGDSLSSSMLSTTPNHDPMAGGDKDDGFDRRVAFLEPAGPGQGQNGKLKPGNTLPVPEATGKGQRRMSDPESVSSVFSDTPIVV.

The first 27 residues, 1–27 (MHPHRDPRGLWLLLPSLSLLLFEVARA), serve as a signal peptide directing secretion. The LRRNT domain maps to 28-61 (GRAVVSCPAACLCASNILSCSKQQLPNVPHSLPS). The Extracellular segment spans residues 28 to 372 (GRAVVSCPAA…LHGHHDTLNT (345 aa)). Disulfide bonds link Cys-34/Cys-40 and Cys-38/Cys-47. LRR repeat units lie at residues 62 to 83 (YTAL…WTPT), 87 to 108 (QLHS…AFSP), 111 to 132 (NLRY…LFSD), 135 to 156 (VLEV…AFDD), 159 to 179 (QLQK…ELVK), and 186 to 206 (KLTL…PDLQ). Asn-72 carries an N-linked (GlcNAc...) asparagine glycan. Positions 221-272 (NPLNCDCELYQLFSHWQYRQLSSVMDFQEDLYCMNSKKLHNVFNLSFLNCGE) constitute an LRRCT domain. Intrachain disulfides connect Cys-225/Cys-253, Cys-227/Cys-270, and Cys-290/Cys-341. N-linked (GlcNAc...) asparagine glycosylation is found at Asn-264, Asn-315, Asn-349, and Asn-360. Residues 269 to 353 (NCGEYKERAW…MGETFNETLS (85 aa)) form the Ig-like C2-type domain. Residues 373–393 (AYTTLVGCILSVVLVLIYLYL) form a helical membrane-spanning segment. Residues 394–493 (TPCRCWCRGV…SVFSDTPIVV (100 aa)) lie on the Cytoplasmic side of the membrane. The tract at residues 405-493 (KPSSHQGDSL…SVFSDTPIVV (89 aa)) is disordered. Positions 408 to 424 (SHQGDSLSSSMLSTTPN) are enriched in polar residues. The segment covering 431-442 (GDKDDGFDRRVA) has biased composition (basic and acidic residues). Phosphoserine is present on residues Ser-477 and Ser-481.

The protein belongs to the immunoglobulin superfamily. AMIGO family. As to quaternary structure, homodimer, and heterodimer with AMIGO2 and AMIGO3. Interacts with KCNB1.

Its subcellular location is the cell membrane. It is found in the perikaryon. The protein localises to the cell projection. It localises to the dendrite. The protein resides in the axon. Its function is as follows. Promotes growth and fasciculation of neurites from cultured hippocampal neurons. May be involved in fasciculation as well as myelination of developing neural axons. May have a role in regeneration as well as neural plasticity in the adult nervous system. May mediate homophilic as well as heterophilic cell-cell interaction and contribute to signal transduction through its intracellular domain. Assembled with KCNB1 modulates the gating characteristics of the delayed rectifier voltage-dependent potassium channel KCNB1. The chain is Amphoterin-induced protein 1 from Homo sapiens (Human).